The primary structure comprises 549 residues: Glucose-6-phosphate isomerase (549 aa).

An N6-acetyllysine mark is found at Lys-80, Lys-228, and Lys-234. The active-site Proton donor is the Glu-355. Catalysis depends on residues His-386 and Lys-514.

The protein belongs to the GPI family.

Its subcellular location is the cytoplasm. The enzyme catalyses alpha-D-glucose 6-phosphate = beta-D-fructose 6-phosphate. Its pathway is carbohydrate biosynthesis; gluconeogenesis. The protein operates within carbohydrate degradation; glycolysis; D-glyceraldehyde 3-phosphate and glycerone phosphate from D-glucose: step 2/4. Its function is as follows. Catalyzes the reversible isomerization of glucose-6-phosphate to fructose-6-phosphate. The chain is Glucose-6-phosphate isomerase from Shigella boydii serotype 4 (strain Sb227).